A 628-amino-acid chain; its full sequence is Nucleoside-triphosphatase 1 (628 aa).

Positions 1 to 25 (MWLPVYVPLLLVFGVSLSLPQGSLG) are cleaved as a signal peptide. Glu236 (proton acceptor) is an active-site residue. Residue Asn432 is glycosylated (N-linked (GlcNAc...) asparagine).

The protein belongs to the GDA1/CD39 NTPase family. Homotetramer.

It is found in the secreted. It localises to the parasitophorous vacuole. It carries out the reaction a ribonucleoside 5'-triphosphate + H2O = a ribonucleoside 5'-diphosphate + phosphate + H(+). May perform an important processing step in the conversion of high energy nucleotides prior to uptake by the parasite and may contribute to intracellular survival and virulence. NTPAse-I has a specific activity 4.5-fold higher than NTPAse-II in hydrolysis of ATP. The primary difference between these isozymes lies in their ability to hydrolyze nucleoside triphosphate versus diphosphate substrates. While NTPAse-II hydrolyzes ATP to ADP and ADP to AMP at almost the same rate, NTPAse-I hydrolyzes ADP to AMP at a much slower rate (0.7% of the rate for ATP). The polypeptide is Nucleoside-triphosphatase 1 (NTP3) (Toxoplasma gondii).